Reading from the N-terminus, the 307-residue chain is Glycerol-3-phosphate dehydrogenase [NAD(P)+] (307 aa).

NADPH-binding residues include Trp14, Arg34, Arg35, and Lys82. Sn-glycerol 3-phosphate is bound by residues Lys82 and Gly110. NADPH is bound at residue Ser114. Lys165, Asp218, Ser228, Arg229, and Asn230 together coordinate sn-glycerol 3-phosphate. The Proton acceptor role is filled by Lys165. Arg229 serves as a coordination point for NADPH. NADPH is bound at residue Glu255.

Belongs to the NAD-dependent glycerol-3-phosphate dehydrogenase family.

The protein localises to the cytoplasm. The catalysed reaction is sn-glycerol 3-phosphate + NAD(+) = dihydroxyacetone phosphate + NADH + H(+). The enzyme catalyses sn-glycerol 3-phosphate + NADP(+) = dihydroxyacetone phosphate + NADPH + H(+). It participates in membrane lipid metabolism; glycerophospholipid metabolism. Functionally, catalyzes the reduction of the glycolytic intermediate dihydroxyacetone phosphate (DHAP) to sn-glycerol 3-phosphate (G3P), the key precursor for phospholipid synthesis. This Trichormus variabilis (strain ATCC 29413 / PCC 7937) (Anabaena variabilis) protein is Glycerol-3-phosphate dehydrogenase [NAD(P)+].